Consider the following 599-residue polypeptide: DNA primase (599 aa).

Residues 40 to 64 (CPFHGENTPSFSVSPDKQLYHCFGC) form a CHC2-type zinc finger. The region spanning 259–342 (NEAVLFEGYV…KVAMIPDGLD (84 aa)) is the Toprim domain. Residues Glu-265, Asp-309, and Asp-311 each coordinate Mg(2+).

This sequence belongs to the DnaG primase family. Monomer. Interacts with DnaB. The cofactor is Zn(2+). Requires Mg(2+) as cofactor.

The catalysed reaction is ssDNA + n NTP = ssDNA/pppN(pN)n-1 hybrid + (n-1) diphosphate.. In terms of biological role, RNA polymerase that catalyzes the synthesis of short RNA molecules used as primers for DNA polymerase during DNA replication. The sequence is that of DNA primase from Halalkalibacterium halodurans (strain ATCC BAA-125 / DSM 18197 / FERM 7344 / JCM 9153 / C-125) (Bacillus halodurans).